The chain runs to 1082 residues: Probable arabinosyltransferase B (1082 aa).

13 consecutive transmembrane segments (helical) span residues 28–50 (WVATIAGLLGFVLSVSIPLLPVT), 223–241 (LAAMLLAIVSTVIALLALW), 262–281 (VTAVDGVVVGGMAIWYVIGA), 333–352 (SIWIRLPDLICALICWLLLS), 359–381 (LGPAVAGSRAAMWAAGLVLLGAW), 420–442 (AITTAAFTLGIQPTGLIAVAALL), 462–481 (WPLIAPLLAAGTVILAVVFA), 522–544 (AISRRVAFVFTAMCLFPSLFMML), 557–574 (AWRLMGIIFATMFFLMFT), 578–600 (WTHHFGLFAAVGGAMAALATVLV), 613–635 (AFLSLVLFVLAFCFASTNGWWYV), 650–672 (GGVQISAIFFALSAIAALWAFWL), and 689–711 (APIPVAAGFMVVVMMASMAIGVV).

The protein belongs to the emb family.

It is found in the cell membrane. In terms of biological role, arabinosyl transferase responsible for the polymerization of arabinose into the arabinan of arabinogalactan. This chain is Probable arabinosyltransferase B (embB), found in Mycolicibacterium smegmatis (Mycobacterium smegmatis).